A 669-amino-acid polypeptide reads, in one-letter code: DNA mismatch repair protein MutL (669 aa).

The interval 356–377 (FEQRQNTENNQEKTFSSEESNS) is disordered. Residues 361-377 (NTENNQEKTFSSEESNS) show a composition bias toward polar residues.

The protein belongs to the DNA mismatch repair MutL/HexB family.

In terms of biological role, this protein is involved in the repair of mismatches in DNA. It is required for dam-dependent methyl-directed DNA mismatch repair. May act as a 'molecular matchmaker', a protein that promotes the formation of a stable complex between two or more DNA-binding proteins in an ATP-dependent manner without itself being part of a final effector complex. The polypeptide is DNA mismatch repair protein MutL (Staphylococcus aureus (strain MSSA476)).